The primary structure comprises 403 residues: UPF0284 protein PMT_1350 (403 aa).

This sequence belongs to the UPF0284 family.

The chain is UPF0284 protein PMT_1350 from Prochlorococcus marinus (strain MIT 9313).